The sequence spans 77 residues: Sec-independent protein translocase protein TatA (77 aa).

A helical transmembrane segment spans residues 1-21 (MGSLSIWHWILVIAVVLLLFG). A compositionally biased stretch (basic and acidic residues) spans 42–60 (GMQDDDKPADKPEPAKSIE). Positions 42 to 77 (GMQDDDKPADKPEPAKSIEHNAAPTAARSDVGSKAV) are disordered.

Belongs to the TatA/E family. As to quaternary structure, the Tat system comprises two distinct complexes: a TatABC complex, containing multiple copies of TatA, TatB and TatC subunits, and a separate TatA complex, containing only TatA subunits. Substrates initially bind to the TatABC complex, which probably triggers association of the separate TatA complex to form the active translocon.

Its subcellular location is the cell inner membrane. Functionally, part of the twin-arginine translocation (Tat) system that transports large folded proteins containing a characteristic twin-arginine motif in their signal peptide across membranes. TatA could form the protein-conducting channel of the Tat system. The chain is Sec-independent protein translocase protein TatA from Bradyrhizobium diazoefficiens (strain JCM 10833 / BCRC 13528 / IAM 13628 / NBRC 14792 / USDA 110).